The sequence spans 878 residues: Alanine--tRNA ligase (878 aa).

Positions 568, 572, 670, and 674 each coordinate Zn(2+).

The protein belongs to the class-II aminoacyl-tRNA synthetase family. Zn(2+) serves as cofactor.

The protein localises to the cytoplasm. The enzyme catalyses tRNA(Ala) + L-alanine + ATP = L-alanyl-tRNA(Ala) + AMP + diphosphate. Functionally, catalyzes the attachment of alanine to tRNA(Ala) in a two-step reaction: alanine is first activated by ATP to form Ala-AMP and then transferred to the acceptor end of tRNA(Ala). Also edits incorrectly charged Ser-tRNA(Ala) and Gly-tRNA(Ala) via its editing domain. The sequence is that of Alanine--tRNA ligase from Latilactobacillus sakei subsp. sakei (strain 23K) (Lactobacillus sakei subsp. sakei).